The sequence spans 853 residues: DNA mismatch repair protein MutS (853 aa).

614 to 621 (GPNMGGKS) contributes to the ATP binding site.

Belongs to the DNA mismatch repair MutS family.

This protein is involved in the repair of mismatches in DNA. It is possible that it carries out the mismatch recognition step. This protein has a weak ATPase activity. The polypeptide is DNA mismatch repair protein MutS (Citrobacter koseri (strain ATCC BAA-895 / CDC 4225-83 / SGSC4696)).